Reading from the N-terminus, the 570-residue chain is Probable metalloreductase AIM14 (570 aa).

At 1–20 (MKESPLITLVKRHSETHFAN) the chain is on the extracellular side. Residues 21 to 41 (IKYGYYVLIISLVYLIGLALL) traverse the membrane as a helical segment. Residues 42–69 (RAFGRRTPSRSSSAFKNKIIYRLYDIDP) are Cytoplasmic-facing. A helical transmembrane segment spans residues 70 to 90 (AIHLGILFFAVLIPFYYHYSL). The Extracellular segment spans residues 91–141 (TTQSTVYLKRLGRLSYALIPLNLFLTLRPNWFLRKNCTYTDFIPFHKWFSR). The 119-residue stretch at 101–219 (LGRLSYALIP…NLVNVAFILL (119 aa)) folds into the Ferric oxidoreductase domain. The chain crosses the membrane as a helical span at residues 142–162 (IITVIGLLHGIFFIIKWAIDD). At 163 to 176 (NVSLKQKLILKTFN) the chain is on the cytoplasmic side. Residues 177–197 (FAGFIISILVLFLLICSIGPM) traverse the membrane as a helical segment. At 198–373 (RRYNYRLFYI…PEECYSQGTN (176 aa)) the chain is on the extracellular side. An FAD-binding FR-type domain is found at 250–388 (FAKSLMILNK…GGSGISFALP (139 aa)). The helical transmembrane segment at 374 to 394 (IAIICGGSGISFALPLFRHFF) threads the bilayer. Residues 395–570 (NKENVKYLKM…INFVCETYGL (176 aa)) are Cytoplasmic-facing. Residues 480–505 (ISNFNSENADSNDNTPETSHSPTKEN) show a composition bias toward polar residues. The disordered stretch occupies residues 480-509 (ISNFNSENADSNDNTPETSHSPTKENGSMI).

The protein belongs to the ferric reductase (FRE) family. AIM14 subfamily. In terms of assembly, interacts with ribosomes.

The protein localises to the membrane. Its function is as follows. Probable cell surface metalloreductase. May be involved in iron or copper homeostasis. This is Probable metalloreductase AIM14 (AIM14) from Saccharomyces cerevisiae (strain ATCC 204508 / S288c) (Baker's yeast).